Consider the following 77-residue polypeptide: U14-theraphotoxin-Cg1a 3 (77 aa).

The N-terminal stretch at 1 to 21 (MKTSVLLVILGIAAITVQCTA) is a signal peptide. Residues 22–49 (SESVEQDSLRTFVDTVLGWNAEMASEAR) constitute a propeptide that is removed on maturation. 3 disulfides stabilise this stretch: Cys-50–Cys-64, Cys-57–Cys-69, and Cys-63–Cys-75. Lysine amide is present on Lys-77.

It belongs to the neurotoxin 10 (Hwtx-1) family. 65 (Jztx-21) subfamily. Expressed by the venom gland.

The protein resides in the secreted. Functionally, probable ion channel inhibitor. The chain is U14-theraphotoxin-Cg1a 3 from Chilobrachys guangxiensis (Chinese earth tiger tarantula).